Here is a 396-residue protein sequence, read N- to C-terminus: Probable sugar efflux transporter (396 aa).

Helical transmembrane passes span 15-35 (VVTL…PVGL), 50-70 (VGIM…PFML), 81-101 (LICL…AWNF), 103-123 (VLVI…SITA), 136-156 (AQAL…GLPI), 169-189 (TFFA…KLLP), 209-229 (PALM…YTAY), 246-266 (FATV…LVFG), 275-295 (SLVS…LPAA), 301-321 (LAIL…GMQV), 333-353 (VAMA…ALVG), and 364-384 (AIGY…VLIF).

It belongs to the major facilitator superfamily. SotB (TC 2.A.1.2) family.

The protein localises to the cell inner membrane. In terms of biological role, involved in the efflux of sugars. The physiological role may be the reduction of the intracellular concentration of toxic sugars or sugar metabolites. The sequence is that of Probable sugar efflux transporter from Salmonella agona (strain SL483).